The chain runs to 189 residues: Peptidyl-tRNA hydrolase (189 aa).

Tyr-16 contacts tRNA. His-21 (proton acceptor) is an active-site residue. TRNA contacts are provided by Phe-67, Asn-69, and Asn-115.

The protein belongs to the PTH family. As to quaternary structure, monomer.

It is found in the cytoplasm. It catalyses the reaction an N-acyl-L-alpha-aminoacyl-tRNA + H2O = an N-acyl-L-amino acid + a tRNA + H(+). Its function is as follows. Hydrolyzes ribosome-free peptidyl-tRNAs (with 1 or more amino acids incorporated), which drop off the ribosome during protein synthesis, or as a result of ribosome stalling. In terms of biological role, catalyzes the release of premature peptidyl moieties from peptidyl-tRNA molecules trapped in stalled 50S ribosomal subunits, and thus maintains levels of free tRNAs and 50S ribosomes. This Legionella pneumophila (strain Corby) protein is Peptidyl-tRNA hydrolase.